The sequence spans 290 residues: Glutamate racemase (290 aa).

Residues 24-25 and 56-57 contribute to the substrate site; these read DS and YG. Residue C87 is the Proton donor/acceptor of the active site. 88-89 contributes to the substrate binding site; sequence NT. C199 functions as the Proton donor/acceptor in the catalytic mechanism. 200-201 serves as a coordination point for substrate; that stretch reads TH. The tract at residues 271 to 290 is disordered; that stretch reads GADGASLPDPPSPRIELTTT.

Belongs to the aspartate/glutamate racemases family.

It catalyses the reaction L-glutamate = D-glutamate. It functions in the pathway cell wall biogenesis; peptidoglycan biosynthesis. Its function is as follows. Provides the (R)-glutamate required for cell wall biosynthesis. The protein is Glutamate racemase of Deinococcus radiodurans (strain ATCC 13939 / DSM 20539 / JCM 16871 / CCUG 27074 / LMG 4051 / NBRC 15346 / NCIMB 9279 / VKM B-1422 / R1).